The chain runs to 396 residues: CCA-adding enzyme (396 aa).

2 residues coordinate ATP: Gly-32 and Arg-35. Residues Gly-32 and Arg-35 each coordinate CTP. The Mg(2+) site is built by Asp-45 and Asp-47. ATP is bound by residues Arg-116, Asp-159, Arg-162, Arg-165, and Arg-168. Arg-116, Asp-159, Arg-162, Arg-165, and Arg-168 together coordinate CTP.

It belongs to the tRNA nucleotidyltransferase/poly(A) polymerase family. Bacterial CCA-adding enzyme type 3 subfamily. Homodimer. The cofactor is Mg(2+).

It carries out the reaction a tRNA precursor + 2 CTP + ATP = a tRNA with a 3' CCA end + 3 diphosphate. The catalysed reaction is a tRNA with a 3' CCA end + 2 CTP + ATP = a tRNA with a 3' CCACCA end + 3 diphosphate. Catalyzes the addition and repair of the essential 3'-terminal CCA sequence in tRNAs without using a nucleic acid template. Adds these three nucleotides in the order of C, C, and A to the tRNA nucleotide-73, using CTP and ATP as substrates and producing inorganic pyrophosphate. tRNA 3'-terminal CCA addition is required both for tRNA processing and repair. Also involved in tRNA surveillance by mediating tandem CCA addition to generate a CCACCA at the 3' terminus of unstable tRNAs. While stable tRNAs receive only 3'-terminal CCA, unstable tRNAs are marked with CCACCA and rapidly degraded. This is CCA-adding enzyme from Lactobacillus delbrueckii subsp. bulgaricus (strain ATCC 11842 / DSM 20081 / BCRC 10696 / JCM 1002 / NBRC 13953 / NCIMB 11778 / NCTC 12712 / WDCM 00102 / Lb 14).